The chain runs to 278 residues: Large ribosomal subunit protein uL2 (278 aa).

2 disordered regions span residues 32-54 and 221-278; these read SLCR…TRHI and RGMT…RNAK. Positions 232–245 are enriched in gly residues; that stretch reads NGGGEGKSKSGGGR.

Belongs to the universal ribosomal protein uL2 family. Part of the 50S ribosomal subunit. Forms a bridge to the 30S subunit in the 70S ribosome.

One of the primary rRNA binding proteins. Required for association of the 30S and 50S subunits to form the 70S ribosome, for tRNA binding and peptide bond formation. It has been suggested to have peptidyltransferase activity; this is somewhat controversial. Makes several contacts with the 16S rRNA in the 70S ribosome. This is Large ribosomal subunit protein uL2 from Akkermansia muciniphila (strain ATCC BAA-835 / DSM 22959 / JCM 33894 / BCRC 81048 / CCUG 64013 / CIP 107961 / Muc).